Here is a 250-residue protein sequence, read N- to C-terminus: Formylaminopyrimidine transport permease protein ThiX (250 aa).

Helical transmembrane passes span 5–25 (YQALEPTLFFLMLMVIWEISA), 62–82 (IISIGLALSIVLGILLSLLMF), 94–114 (LLVASQTIPVIALAPIFVLWF), 115–135 (GYSIWSKVAVTVLLTFFPITV), 172–192 (LPSFLTGLRIAVPLAVIGAAV), and 216–236 (PGVFAPIFILSLLGILGFAAI). An ABC transmembrane type-1 domain is found at 56 to 237 (LPATLAIISI…LGILGFAAIK (182 aa)).

Belongs to the binding-protein-dependent transport system permease family. In terms of assembly, the complex is likely composed of an ATP-binding protein (ThiZ), a transmembrane protein (ThiX) and a solute-binding protein (ThiY).

The protein resides in the cell membrane. It participates in cofactor biosynthesis; thiamine diphosphate biosynthesis. Functionally, participates in a thiamine pyrimidine salvage pathway as part of the ABC transporter complex ThiXYZ involved in the import of thiamine degradation products such as the formylaminopyrimidine N-formyl-4-amino-5-aminomethyl-2-methylpyrimidine (FAMP). Is probably responsible for the translocation of the substrate across the membrane. In Halalkalibacterium halodurans (strain ATCC BAA-125 / DSM 18197 / FERM 7344 / JCM 9153 / C-125) (Bacillus halodurans), this protein is Formylaminopyrimidine transport permease protein ThiX.